The sequence spans 991 residues: MKKKFIKMLCSIAIGCMISTSYSIKVSAFSNGNTKTNPNGEFKSLSLNSTNPYKTKYSFNDLNKLSNKEILDLTSKIKWSDISDLFQYNKDSYTFYSNKERVQALIDGLYEKGCNYTSTDDKGIDTLVEILRSGFYLGYYNDSLKYLNDKSFKDKCIPAMIAIENNKNFKLGENGQDTVVHALGKLIGNTSCNDEVVNKTIPILEQYYNEIDKYSKDRLKSNAVYNFMKEINYDISQYEYAHNIRDYKNTPWSGKIDSFIDTISKFASISNVTKDNGWIINNSIYYTAKLSKYHSNPSIPHSVIDNCIEIFPDYSEQYFTAIEAIKEDFNSRDSKGNVIDINKLIEEGKKHYLPKTYTFDNGKIIIKAGDKVEESKIQKLYWASKEVKSQFHRIIGNDKPLEVGNADDILTIVIYNNPEEYKLNKTLYGYSVDNGGIYIEGIGTFFTYERTPQESIYSLEELFRHEFTHYLQGRYLIPGLFNKGDFYKGNNGRITWFEEGSAEFFAGSTRTSVLPRKSMVGGLSKNPKERFNADKLLHSKYSDGWDFYKYGYAFSDYMYNNNKKLFSDLVSTMKNNDVKGYEALIEESSKDSKINKDYEYHMENLVNNYDNYTIPLVSDDYMKQYDNKSLHEIKSDIEKAMDVKNSQITKESSQYFDTYNLKATYTLSSNKGEISNWNYMNNKINEALNKLDNLSWGGYKTVTAYFSNPRLNSNNEVVYDIVFHGLLSHNKNSNEKVEVKEEPEIKDKDSFENVIYEKENNDSFDKANKIHKNQIVMATLDTEDYRDTFYFDALTSGSIDITIENIHGNSDAFNWLVYNDEDLNNYIAYPTKKEDNKLMGSFKVHKPGRYYILVYKTSLNKVNYKLNISDATNMAPVIKKIHEKENNDSFETANKITLDTLVLGNLDYKDVSDIYSFDIENTKDLNIKLTNLNNLGIAWNLYKESDLNNYIAYGAKSDNAIVGKCNLSPGKYYLYVYKYSGDKGNYSVIIN.

An N-terminal signal peptide occupies residues M1 to A28. A propeptide spanning residues F29–P52 is cleaved from the precursor. The S1 metalloprotease domain, degrades FALGPA (furylacryloyl-Leu-Gly-Pro-Ala) stretch occupies residues Y53–L727. An activator domain region spans residues Y57–N330. Residues D340–N611 form a catalytic subdomain region. E440 contacts Ca(2+). Position 465 (H465) interacts with Zn(2+). Residue E466 is part of the active site. H469 contributes to the Zn(2+) binding site. Positions 473, 477, and 479 each coordinate Ca(2+). E499 contributes to the Zn(2+) binding site. The interval D619–K731 is helper subdomain. Collagen-binding domain stretches follow at residues I755 to D870 and I878 to N991. Ca(2+) is bound by residues E757, E759, N761, D784, D787, E883, E885, N887, D888, D910, and D913.

This sequence belongs to the peptidase M9B family. Collagenase subfamily. Requires Ca(2+) as cofactor. It depends on Zn(2+) as a cofactor.

The protein resides in the secreted. It carries out the reaction Digestion of native collagen in the triple helical region at Xaa-|-Gly bonds. With synthetic peptides, a preference is shown for Gly at P3 and P1', Pro and Ala at P2 and P2', and hydroxyproline, Ala or Arg at P3'.. With respect to regulation, partially inhibited by 1-10-phenanthroline; inactivation is irreversible. Partially inhibited by EDTA; inactivation is reversible. Inhibited by broad-spectrum zinc metalloprotease inhibitor batimastat. N-aryl mercaptoacetamide-based inhibitors have been isolated that act on clostridial collagenases with submicromolar affinity while having negligibile activity on human collagenases. Its function is as follows. Clostridial collagenases are among the most efficient degraders of eukaryotic collagen known; saprophytes use collagen as a carbon source while pathogens additionally digest collagen to aid in host colonization. Has both tripeptidylcarboxypeptidase on Gly-X-Y and endopeptidase activities; the endopeptidase cuts within the triple helix region of collagen while tripeptidylcarboxypeptidase successively digests the exposed ends, thus clostridial collagenases can digest large sections of collagen. The activator domain (residues 57-330) and catalytic subdomain (340-611) open and close around substrate allowing digestion when the protein is closed. The polypeptide is Collagenase ColT (Clostridium tetani (strain Massachusetts / E88)).